Reading from the N-terminus, the 391-residue chain is 8-amino-7-oxononanoate synthase (391 aa).

Arginine 19 contacts substrate. Glycine 106–tyrosine 107 provides a ligand contact to pyridoxal 5'-phosphate. Histidine 131 lines the substrate pocket. Serine 178, histidine 206, and threonine 234 together coordinate pyridoxal 5'-phosphate. Lysine 237 is subject to N6-(pyridoxal phosphate)lysine. Threonine 353 serves as a coordination point for substrate.

It belongs to the class-II pyridoxal-phosphate-dependent aminotransferase family. BioF subfamily. Homodimer. The cofactor is pyridoxal 5'-phosphate.

The catalysed reaction is 6-carboxyhexanoyl-[ACP] + L-alanine + H(+) = (8S)-8-amino-7-oxononanoate + holo-[ACP] + CO2. It participates in cofactor biosynthesis; biotin biosynthesis. Its function is as follows. Catalyzes the decarboxylative condensation of pimeloyl-[acyl-carrier protein] and L-alanine to produce 8-amino-7-oxononanoate (AON), [acyl-carrier protein], and carbon dioxide. In Geobacter metallireducens (strain ATCC 53774 / DSM 7210 / GS-15), this protein is 8-amino-7-oxononanoate synthase.